A 199-amino-acid polypeptide reads, in one-letter code: Fe/S biogenesis protein NfuA (199 aa).

[4Fe-4S] cluster contacts are provided by cysteine 151 and cysteine 154.

Belongs to the NfuA family. Homodimer. [4Fe-4S] cluster serves as cofactor.

Functionally, involved in iron-sulfur cluster biogenesis. Binds a 4Fe-4S cluster, can transfer this cluster to apoproteins, and thereby intervenes in the maturation of Fe/S proteins. Could also act as a scaffold/chaperone for damaged Fe/S proteins. The chain is Fe/S biogenesis protein NfuA from Xanthomonas campestris pv. campestris (strain 8004).